We begin with the raw amino-acid sequence, 931 residues long: Protocadherin gamma-B2 (931 aa).

The N-terminal stretch at 1–30 (MKASSGRCGLVRWLQVLLPFLLSLFPGALP) is a signal peptide. 6 Cadherin domains span residues 31 to 133 (VQIR…TPLF), 134 to 242 (KQTK…PPVF), 243 to 347 (SQDV…APEV), 348 to 452 (IVTS…APVF), 453 to 562 (QQTS…APRV), and 570 to 675 (DGSA…LPDL). Residues 31–691 (VQIRYSIPEE…SDPQAELQFY (661 aa)) lie on the Extracellular side of the membrane. N-linked (GlcNAc...) asparagine glycosylation is found at Asn-419 and Asn-545. The helical transmembrane segment at 692 to 712 (LVVALALISVLFFLAVILAIS) threads the bilayer. Residues 713–931 (LRLRRSSRSD…KKKSGKKEKK (219 aa)) are Cytoplasmic-facing. Disordered stretches follow at residues 814–840 (DWRF…WPNN) and 901–931 (ATLT…KEKK). Residues 815–840 (WRFSQAQRPGTSGSQNGDDTGTWPNN) are compositionally biased toward polar residues. Positions 921–931 (NKKKSGKKEKK) are enriched in basic residues.

Its subcellular location is the cell membrane. Its function is as follows. Potential calcium-dependent cell-adhesion protein. May be involved in the establishment and maintenance of specific neuronal connections in the brain. The polypeptide is Protocadherin gamma-B2 (PCDHGB2) (Pan troglodytes (Chimpanzee)).